Consider the following 420-residue polypeptide: Glutamyl-tRNA reductase (420 aa).

Substrate-binding positions include 49-52, serine 109, 114-116, and glutamine 120; these read TCNR and EPQ. The active-site Nucleophile is cysteine 50. 189–194 serves as a coordination point for NADP(+); it reads GAGETI.

The protein belongs to the glutamyl-tRNA reductase family. In terms of assembly, homodimer.

It carries out the reaction (S)-4-amino-5-oxopentanoate + tRNA(Glu) + NADP(+) = L-glutamyl-tRNA(Glu) + NADPH + H(+). It functions in the pathway porphyrin-containing compound metabolism; protoporphyrin-IX biosynthesis; 5-aminolevulinate from L-glutamyl-tRNA(Glu): step 1/2. Its function is as follows. Catalyzes the NADPH-dependent reduction of glutamyl-tRNA(Glu) to glutamate 1-semialdehyde (GSA). This is Glutamyl-tRNA reductase from Serratia proteamaculans (strain 568).